Consider the following 289-residue polypeptide: Diaminopimelate epimerase (289 aa).

Asn-13, Gln-47, and Asn-67 together coordinate substrate. Cys-76 acts as the Proton donor in catalysis. Substrate contacts are provided by residues 77–78 (GN), Asn-167, Asn-200, and 218–219 (ER). Cys-227 serves as the catalytic Proton acceptor. 228 to 229 (GT) provides a ligand contact to substrate.

This sequence belongs to the diaminopimelate epimerase family. Homodimer.

It is found in the cytoplasm. It carries out the reaction (2S,6S)-2,6-diaminopimelate = meso-2,6-diaminopimelate. The protein operates within amino-acid biosynthesis; L-lysine biosynthesis via DAP pathway; DL-2,6-diaminopimelate from LL-2,6-diaminopimelate: step 1/1. In terms of biological role, catalyzes the stereoinversion of LL-2,6-diaminopimelate (L,L-DAP) to meso-diaminopimelate (meso-DAP), a precursor of L-lysine and an essential component of the bacterial peptidoglycan. The sequence is that of Diaminopimelate epimerase from Burkholderia pseudomallei (strain 668).